A 96-amino-acid chain; its full sequence is Putative pterin-4-alpha-carbinolamine dehydratase (96 aa).

The protein belongs to the pterin-4-alpha-carbinolamine dehydratase family.

The enzyme catalyses (4aS,6R)-4a-hydroxy-L-erythro-5,6,7,8-tetrahydrobiopterin = (6R)-L-erythro-6,7-dihydrobiopterin + H2O. This is Putative pterin-4-alpha-carbinolamine dehydratase from Novosphingobium aromaticivorans (strain ATCC 700278 / DSM 12444 / CCUG 56034 / CIP 105152 / NBRC 16084 / F199).